The following is a 148-amino-acid chain: Ribosomal RNA large subunit methyltransferase H 2 (148 aa).

Residues Leu-74, Gly-106, and 125–130 (FSKMTF) each bind S-adenosyl-L-methionine.

This sequence belongs to the RNA methyltransferase RlmH family. In terms of assembly, homodimer.

Its subcellular location is the cytoplasm. It carries out the reaction pseudouridine(1915) in 23S rRNA + S-adenosyl-L-methionine = N(3)-methylpseudouridine(1915) in 23S rRNA + S-adenosyl-L-homocysteine + H(+). Functionally, specifically methylates the pseudouridine at position 1915 (m3Psi1915) in 23S rRNA. In Caldanaerobacter subterraneus subsp. tengcongensis (strain DSM 15242 / JCM 11007 / NBRC 100824 / MB4) (Thermoanaerobacter tengcongensis), this protein is Ribosomal RNA large subunit methyltransferase H 2.